A 119-amino-acid polypeptide reads, in one-letter code: Autophagy-related protein 8C-like (119 aa).

Residue G117 is the site of Phosphatidylethanolamine amidated glycine attachment. A propeptide spans 118-119 (SF) (removed in mature form).

Belongs to the ATG8 family. As to quaternary structure, interacts with ATG4. Interacts with the Phytophtora infestans effector PexRD54. Interacts with JOKA2. In terms of processing, the C-terminal 2 residues are removed by ATG4 to expose Gly-117 at the C-terminus. The C-terminal Gly is then amidated with phosphatidylethanolamine by an activating system similar to that for ubiquitin. The phosphatidylethanolamine amidated glycine is required for autophagosome formation.

It is found in the cytoplasmic vesicle. It localises to the autophagosome membrane. Its subcellular location is the vacuole membrane. The protein localises to the cytoplasm. The protein resides in the cytoskeleton. Functionally, ubiquitin-like modifier involved in autophagosomes formation. May mediate the delivery of the autophagosomes to the vacuole via the microtubule cytoskeleton. ATG8CL-mediated selective autophagy contributes to defense against the fungal pathogen Phytophtora infestans. The polypeptide is Autophagy-related protein 8C-like (Solanum tuberosum (Potato)).